The sequence spans 218 residues: Small ribosomal subunit protein uS3c (218 aa).

A KH type-2 domain is found at 47–118 (VQKNMRTSSG…KLNIAVTRIA (72 aa)).

Belongs to the universal ribosomal protein uS3 family. As to quaternary structure, part of the 30S ribosomal subunit.

It is found in the plastid. The protein localises to the chloroplast. The polypeptide is Small ribosomal subunit protein uS3c (rps3) (Nicotiana tomentosiformis (Tobacco)).